The primary structure comprises 272 residues: ATP-dependent Clp protease proteolytic subunit, mitochondrial (272 aa).

The transit peptide at 1-52 directs the protein to the mitochondrion; the sequence is MWPRVLLGEARVAVDGCRALLSRLAVHFSPPWTAVSCSPLRRSLHGTATRAF. Catalysis depends on serine 149, which acts as the Nucleophile. The active site involves histidine 174. An N6-succinyllysine modification is found at lysine 196. Lysine 207 is modified (N6-acetyllysine). A disordered region spans residues 240–272; that stretch reads VLVHPPQDGEDEPELVQKETATAPTDPPAPTST.

The protein belongs to the peptidase S14 family. In terms of assembly, fourteen CLPP subunits assemble into 2 heptameric rings which stack back to back to give a disk-like structure with a central cavity. Component of the ClpXP complex formed by the assembly of two CLPP heptameric rings with two CLPX hexameric rings, giving rise to a symmetrical structure with two central CLPP rings flanked by a CLPX ring at either end of the complex. In terms of tissue distribution, detected in liver (at protein level). High levels found in heart, liver and skeletal muscle.

Its subcellular location is the mitochondrion matrix. The catalysed reaction is Hydrolysis of proteins to small peptides in the presence of ATP and magnesium. alpha-casein is the usual test substrate. In the absence of ATP, only oligopeptides shorter than five residues are hydrolyzed (such as succinyl-Leu-Tyr-|-NHMec, and Leu-Tyr-Leu-|-Tyr-Trp, in which cleavage of the -Tyr-|-Leu- and -Tyr-|-Trp bonds also occurs).. In terms of biological role, protease component of the ClpXP complex that cleaves peptides and various proteins in an ATP-dependent process. Has low peptidase activity in the absence of CLPX. The ClpXP complex can degrade CSN1S1, CSN2 and CSN3, as well as synthetic peptides (in vitro) and may be responsible for a fairly general and central housekeeping function rather than for the degradation of specific substrates. Cleaves PINK1 in the mitochondrion. The protein is ATP-dependent Clp protease proteolytic subunit, mitochondrial of Mus musculus (Mouse).